The chain runs to 292 residues: Elongation factor Ts (292 aa).

An involved in Mg(2+) ion dislocation from EF-Tu region spans residues 79–82 (TDFV).

Belongs to the EF-Ts family.

It is found in the cytoplasm. Functionally, associates with the EF-Tu.GDP complex and induces the exchange of GDP to GTP. It remains bound to the aminoacyl-tRNA.EF-Tu.GTP complex up to the GTP hydrolysis stage on the ribosome. The sequence is that of Elongation factor Ts from Xanthomonas axonopodis pv. citri (strain 306).